Consider the following 92-residue polypeptide: Non-specific lipid-transfer protein A (92 aa).

Intrachain disulfides connect C3–C51, C13–C28, C29–C74, and C49–C88.

This sequence belongs to the plant LTP family.

Plant non-specific lipid-transfer proteins transfer phospholipids as well as galactolipids across membranes. May play a role in wax or cutin deposition in the cell walls of expanding epidermal cells and certain secretory tissues. The polypeptide is Non-specific lipid-transfer protein A (Ricinus communis (Castor bean)).